We begin with the raw amino-acid sequence, 226 residues long: 2-C-methyl-D-erythritol 4-phosphate cytidylyltransferase (226 aa).

It belongs to the IspD/TarI cytidylyltransferase family. IspD subfamily.

The catalysed reaction is 2-C-methyl-D-erythritol 4-phosphate + CTP + H(+) = 4-CDP-2-C-methyl-D-erythritol + diphosphate. It functions in the pathway isoprenoid biosynthesis; isopentenyl diphosphate biosynthesis via DXP pathway; isopentenyl diphosphate from 1-deoxy-D-xylulose 5-phosphate: step 2/6. In terms of biological role, catalyzes the formation of 4-diphosphocytidyl-2-C-methyl-D-erythritol from CTP and 2-C-methyl-D-erythritol 4-phosphate (MEP). The polypeptide is 2-C-methyl-D-erythritol 4-phosphate cytidylyltransferase (Haemophilus ducreyi (strain 35000HP / ATCC 700724)).